A 291-amino-acid chain; its full sequence is Pyridoxal 5'-phosphate synthase subunit PdxS (291 aa).

Position 23 (Asp23) interacts with D-ribose 5-phosphate. The active-site Schiff-base intermediate with D-ribose 5-phosphate is Lys80. A D-ribose 5-phosphate-binding site is contributed by Gly152. Arg164 contributes to the D-glyceraldehyde 3-phosphate binding site. Residues Gly213 and 234–235 (GS) each bind D-ribose 5-phosphate.

It belongs to the PdxS/SNZ family. In terms of assembly, in the presence of PdxT, forms a dodecamer of heterodimers.

The enzyme catalyses aldehydo-D-ribose 5-phosphate + D-glyceraldehyde 3-phosphate + L-glutamine = pyridoxal 5'-phosphate + L-glutamate + phosphate + 3 H2O + H(+). Its pathway is cofactor biosynthesis; pyridoxal 5'-phosphate biosynthesis. In terms of biological role, catalyzes the formation of pyridoxal 5'-phosphate from ribose 5-phosphate (RBP), glyceraldehyde 3-phosphate (G3P) and ammonia. The ammonia is provided by the PdxT subunit. Can also use ribulose 5-phosphate and dihydroxyacetone phosphate as substrates, resulting from enzyme-catalyzed isomerization of RBP and G3P, respectively. The chain is Pyridoxal 5'-phosphate synthase subunit PdxS from Bifidobacterium longum (strain DJO10A).